The chain runs to 282 residues: Ribosomal RNA small subunit methyltransferase A (282 aa).

The segment at 1-21 is disordered; the sequence is MPDFPKEHATPMSNRPPAHQA. The S-adenosyl-L-methionine site is built by N28, L30, G55, E76, D101, and N126.

It belongs to the class I-like SAM-binding methyltransferase superfamily. rRNA adenine N(6)-methyltransferase family. RsmA subfamily.

It is found in the cytoplasm. It carries out the reaction adenosine(1518)/adenosine(1519) in 16S rRNA + 4 S-adenosyl-L-methionine = N(6)-dimethyladenosine(1518)/N(6)-dimethyladenosine(1519) in 16S rRNA + 4 S-adenosyl-L-homocysteine + 4 H(+). Its function is as follows. Specifically dimethylates two adjacent adenosines (A1518 and A1519) in the loop of a conserved hairpin near the 3'-end of 16S rRNA in the 30S particle. May play a critical role in biogenesis of 30S subunits. The chain is Ribosomal RNA small subunit methyltransferase A from Chromohalobacter salexigens (strain ATCC BAA-138 / DSM 3043 / CIP 106854 / NCIMB 13768 / 1H11).